A 515-amino-acid chain; its full sequence is Probable malate:quinone oxidoreductase (515 aa).

The protein belongs to the MQO family. FAD serves as cofactor.

The enzyme catalyses (S)-malate + a quinone = a quinol + oxaloacetate. Its pathway is carbohydrate metabolism; tricarboxylic acid cycle; oxaloacetate from (S)-malate (quinone route): step 1/1. This Blochmanniella pennsylvanica (strain BPEN) protein is Probable malate:quinone oxidoreductase.